The chain runs to 128 residues: Large ribosomal subunit protein bL17 (128 aa).

Belongs to the bacterial ribosomal protein bL17 family. In terms of assembly, part of the 50S ribosomal subunit. Contacts protein L32.

This chain is Large ribosomal subunit protein bL17, found in Pseudomonas syringae pv. tomato (strain ATCC BAA-871 / DC3000).